The following is a 194-amino-acid chain: Protein GrpE (194 aa).

Residues 1 to 14 (MENTQENPTSQNPT) show a composition bias toward polar residues. The tract at residues 1–50 (MENTQENPTSQNPTPADETARQAAEAAAPQQEAAANAATDSPVNAEQSAL) is disordered. Over residues 21–38 (RQAAEAAAPQQEAAANAA) the composition is skewed to low complexity.

This sequence belongs to the GrpE family. As to quaternary structure, homodimer.

The protein localises to the cytoplasm. Functionally, participates actively in the response to hyperosmotic and heat shock by preventing the aggregation of stress-denatured proteins, in association with DnaK and GrpE. It is the nucleotide exchange factor for DnaK and may function as a thermosensor. Unfolded proteins bind initially to DnaJ; upon interaction with the DnaJ-bound protein, DnaK hydrolyzes its bound ATP, resulting in the formation of a stable complex. GrpE releases ADP from DnaK; ATP binding to DnaK triggers the release of the substrate protein, thus completing the reaction cycle. Several rounds of ATP-dependent interactions between DnaJ, DnaK and GrpE are required for fully efficient folding. The polypeptide is Protein GrpE (Paraburkholderia phytofirmans (strain DSM 17436 / LMG 22146 / PsJN) (Burkholderia phytofirmans)).